Reading from the N-terminus, the 102-residue chain is NADH-quinone oxidoreductase subunit K (102 aa).

A run of 3 helical transmembrane segments spans residues 5 to 25, 30 to 50, and 62 to 82; these read LTQYLLVAAILFTIGVAGIIL, IIIILMSVELILLSVNLNLVA, and IFALFILTVAAAEAAIGLAIL.

It belongs to the complex I subunit 4L family. NDH-1 is composed of 14 different subunits. Subunits NuoA, H, J, K, L, M, N constitute the membrane sector of the complex.

It is found in the cell inner membrane. It carries out the reaction a quinone + NADH + 5 H(+)(in) = a quinol + NAD(+) + 4 H(+)(out). Functionally, NDH-1 shuttles electrons from NADH, via FMN and iron-sulfur (Fe-S) centers, to quinones in the respiratory chain. The immediate electron acceptor for the enzyme in this species is believed to be ubiquinone. Couples the redox reaction to proton translocation (for every two electrons transferred, four hydrogen ions are translocated across the cytoplasmic membrane), and thus conserves the redox energy in a proton gradient. In Beijerinckia indica subsp. indica (strain ATCC 9039 / DSM 1715 / NCIMB 8712), this protein is NADH-quinone oxidoreductase subunit K.